A 314-amino-acid polypeptide reads, in one-letter code: MIKPQIWFAGTPEFATAALDALVKHVSVAGVLTQPDRPAGRGRKLKASAVKARAEHYQLPIAQPERLQESAPPFAHLPRPDIVVVVAYGLLLPQWFLDYPRLGCINIHASLLPRWRGAAPIQRAIEAGDEETGISIMQMDAGLDTGAVWLEKRLPIGEQSASQLHDALMQLGAEALIDVLPDILAQARAPIPQPSSGACYAHKLSKAEAEINWQDDAANIVRKIRAFDLFPVAYSYLDDAPVRFYDGIALSEHTESAPAGTVIEHNQEGIDIVCGSGILRIKRLQLAGKNVVSAAALANGCHLKGRHFARKNQL.

110–113 (SLLP) is a binding site for (6S)-5,6,7,8-tetrahydrofolate.

The protein belongs to the Fmt family.

The enzyme catalyses L-methionyl-tRNA(fMet) + (6R)-10-formyltetrahydrofolate = N-formyl-L-methionyl-tRNA(fMet) + (6S)-5,6,7,8-tetrahydrofolate + H(+). Its function is as follows. Attaches a formyl group to the free amino group of methionyl-tRNA(fMet). The formyl group appears to play a dual role in the initiator identity of N-formylmethionyl-tRNA by promoting its recognition by IF2 and preventing the misappropriation of this tRNA by the elongation apparatus. This Dichelobacter nodosus (strain VCS1703A) protein is Methionyl-tRNA formyltransferase.